Reading from the N-terminus, the 882-residue chain is Cadherin-1 (882 aa).

The N-terminal stretch at 1–22 (MGPWSRSLSALLLLLQVSSWLC) is a signal peptide. Positions 23–154 (QEPEPCHPGF…SSSGLRRRKR (132 aa)) are excised as a propeptide. An N-linked (GlcNAc...) asparagine glycan is attached at asparagine 144. Cadherin domains follow at residues 155–262 (DWVI…KPEF), 263–375 (TQEV…PPVF), 376–486 (NPTT…APIF), 487–593 (VPPE…DNAP), and 594–697 (IPEP…VCKK). At 155 to 709 (DWVIPPISCP…PIEAGLQIPA (555 aa)) the chain is on the extracellular side. A Ca(2+)-binding site is contributed by aspartate 257. O-linked (Man...) serine glycosylation is present at serine 280. O-linked (Man...) threonine glycosylation is present at threonine 285. Aspartate 288 contributes to the Ca(2+) binding site. 4 O-linked (Man...) threonine glycosylation sites follow: threonine 358, threonine 470, threonine 472, and threonine 509. Asparagine 558 is a glycosylation site (N-linked (GlcNAc...) asparagine). 3 O-linked (Man...) threonine glycosylation sites follow: threonine 576, threonine 578, and threonine 580. Residue asparagine 637 is glycosylated (N-linked (GlcNAc...) asparagine). Residues 710–730 (ILGILGGILALLILILLLLLF) form a helical membrane-spanning segment. Over 731 to 882 (LRRRAVVKEP…ADMYGGGEDD (152 aa)) the chain is Cytoplasmic. The interval 747–767 (DTRDNVYYYDEEGGGEEDQDF) is disordered. Phosphotyrosine; by SRC is present on residues tyrosine 753, tyrosine 754, and tyrosine 755. Residues 755–767 (YDEEGGGEEDQDF) show a composition bias toward acidic residues. The interval 758–769 (EGGGEEDQDFDL) is required for binding CTNND1 and PSEN1. Residues serine 770, serine 793, serine 838, serine 840, and serine 846 each carry the phosphoserine modification. Residues 811-882 (IDENLKAADT…ADMYGGGEDD (72 aa)) form a required for binding alpha, beta and gamma catenins region.

Homodimer; disulfide-linked. Component of an E-cadherin/ catenin adhesion complex composed of at least E-cadherin/CDH1, beta-catenin/CTNNB1 or gamma-catenin/JUP, and potentially alpha-catenin/CTNNA1; the complex is located to adherens junctions. Found in a complex composed of CDH1, RAP1A and PKP3; PKP3 acts as a scaffold protein within the complex, the complex is required for CDH1 localization to mature desmosome cell junctions. Interacts with the TRPV4 and CTNNB1 complex. Interacts with CTNND1. The stable association of CTNNA1 is controversial as CTNNA1 was shown not to bind to F-actin when assembled in the complex. Alternatively, the CTNNA1-containing complex may be linked to F-actin by other proteins such as LIMA1. Interaction with PSEN1, cleaves CDH1 resulting in the disassociation of cadherin-based adherens junctions (CAJs). Interacts with AJAP1 and DLGAP5. Interacts with TBC1D2. Interacts with LIMA1. Interacts with CAV1. Interacts with PIP5K1C. Interacts with RAB8B. Interacts with DDR1; this stabilizes CDH1 at the cell surface and inhibits its internalization. Interacts with RAPGEF2. Interacts with KLRG1. Forms a ternary complex composed of ADAM10, CADH1 and EPHA4; within the complex, CADH1 is cleaved by ADAM10 which disrupts adherens junctions. Interacts with SPEF1. Interacts with CTNNB1 and PKP2. Interacts with AMOTL2; the interaction may facilitate binding of radial actin fibers to cell junction complexes. Interacts with DSG3; the interaction is required for CDH1 localization to developing adherens junctions. Post-translationally, during apoptosis or with calcium influx, cleaved by a membrane-bound metalloproteinase (ADAM10), PS1/gamma-secretase and caspase-3. Processing by the metalloproteinase, induced by calcium influx, causes disruption of cell-cell adhesion and the subsequent release of beta-catenin into the cytoplasm. The residual membrane-tethered cleavage product is rapidly degraded via an intracellular proteolytic pathway. Cleavage by caspase-3 releases the cytoplasmic tail resulting in disintegration of the actin microfilament system. The gamma-secretase-mediated cleavage promotes disassembly of adherens junctions. During development of the cochlear organ of Corti, cleavage by ADAM10 at adherens junctions promotes pillar cell separation. N-glycosylation at Asn-637 is essential for expression, folding and trafficking. Addition of bisecting N-acetylglucosamine by MGAT3 modulates its cell membrane location. In terms of processing, ubiquitinated by a SCF complex containing SKP2, which requires prior phosphorylation by CK1/CSNK1A1. Ubiquitinated by CBLL1/HAKAI, requires prior phosphorylation at Tyr-754. Post-translationally, O-glycosylated. O-manosylated by TMTC1, TMTC2, TMTC3 or TMTC4. Thr-285 and Thr-509 are O-mannosylated by TMTC2 or TMTC4 but not TMTC1 or TMTC3.

The protein localises to the cell junction. It is found in the adherens junction. Its subcellular location is the cell membrane. It localises to the endosome. The protein resides in the golgi apparatus. The protein localises to the trans-Golgi network. It is found in the cytoplasm. Its subcellular location is the desmosome. Its function is as follows. Cadherins are calcium-dependent cell adhesion proteins. They preferentially interact with themselves in a homophilic manner in connecting cells; cadherins may thus contribute to the sorting of heterogeneous cell types. CDH1 is involved in mechanisms regulating cell-cell adhesions, mobility and proliferation of epithelial cells. Promotes organization of radial actin fiber structure and cellular response to contractile forces, via its interaction with AMOTL2 which facilitates anchoring of radial actin fibers to CDH1 junction complexes at the cell membrane. Plays a role in the early stages of desmosome cell-cell junction formation via facilitating the recruitment of DSG2 and DSP to desmosome plaques. Has a potent invasive suppressor role. It is a ligand for integrin alpha-E/beta-7. Functionally, E-Cad/CTF2 promotes non-amyloidogenic degradation of Abeta precursors. Has a strong inhibitory effect on APP C99 and C83 production. The chain is Cadherin-1 (CDH1) from Pongo abelii (Sumatran orangutan).